Reading from the N-terminus, the 743-residue chain is Probable TonB-dependent siderophore receptor PiuA (743 aa).

An N-terminal signal peptide occupies residues 1–28 (MSLIRTRKKIVSSAIASSLSMIATTAMA). One can recognise a TBDR plug domain in the interval 61-167 (PLLDTPKSVS…VGGSINMISK (107 aa)). One can recognise a TBDR beta-barrel domain in the interval 172-743 (GDFLEGSVAA…SAVLAVNFKY (572 aa)). Cystine bridges form between Cys408-Cys416 and Cys627-Cys632.

Belongs to the TonB-dependent receptor family.

It is found in the cell outer membrane. Functionally, probably involved in the initial step of iron uptake by binding iron chelating siderophores, thereby allowing extraction of iron from the environment. May bind the siderophore, ferric enterobactin, with micromolar affinity. The chain is Probable TonB-dependent siderophore receptor PiuA from Acinetobacter baumannii (strain ATCC 19606 / DSM 30007 / JCM 6841 / CCUG 19606 / CIP 70.34 / NBRC 109757 / NCIMB 12457 / NCTC 12156 / 81).